The primary structure comprises 187 residues: Large ribosomal subunit protein uL13 (187 aa).

This sequence belongs to the universal ribosomal protein uL13 family.

The protein is Large ribosomal subunit protein uL13 (rpl13a) of Dictyostelium discoideum (Social amoeba).